The following is a 1485-amino-acid chain: DNA topoisomerase 2 (1485 aa).

Over residues M1–G16 the composition is skewed to acidic residues. Residues M1–T76 form a disordered region. Residues D46–E59 are compositionally biased toward polar residues. Residues V64–T76 are compositionally biased toward low complexity. ATP-binding positions include N136, N165, S193–N195, and G206–K213. Residues K388–K392 are interaction with DNA. Residue Q421–K423 coordinates ATP. The region spanning C499–I613 is the Toprim domain. The Mg(2+) site is built by E505, D582, and D584. The region spanning I745 to L1195 is the Topo IIA-type catalytic domain. Y835 acts as the O-(5'-phospho-DNA)-tyrosine intermediate in catalysis. An interaction with DNA region spans residues K1019–N1028. Residues E1216–N1225 are compositionally biased toward basic and acidic residues. Residues E1216–D1485 form a disordered region. The segment covering R1226–R1242 has biased composition (basic residues). Polar residues predominate over residues E1260–L1273. The span at A1278–I1307 shows a compositional bias: basic and acidic residues. A phosphoserine mark is found at S1310 and S1345. A compositionally biased stretch (basic residues) spans A1387–S1396. Positions G1413 to A1425 are enriched in polar residues. S1433 carries the post-translational modification Phosphoserine. Positions D1473–D1485 are enriched in acidic residues.

It belongs to the type II topoisomerase family. Homodimer. Requires Mg(2+) as cofactor. Mn(2+) is required as a cofactor. It depends on Ca(2+) as a cofactor. In terms of processing, phosphorylated at multiple sites at both extremities of the protein.

The protein localises to the nucleus. It catalyses the reaction ATP-dependent breakage, passage and rejoining of double-stranded DNA.. Its function is as follows. Control of topological states of DNA by transient breakage and subsequent rejoining of DNA strands. Topoisomerase II makes double-strand breaks. The protein is DNA topoisomerase 2 (top2) of Schizosaccharomyces pombe (strain 972 / ATCC 24843) (Fission yeast).